The chain runs to 325 residues: Aldose 1-epimerase (325 aa).

Substrate is bound at residue 73–74; it reads NR. His-177 serves as the catalytic Proton donor. Asp-230 is a binding site for substrate. Catalysis depends on Glu-283, which acts as the Proton acceptor.

Belongs to the aldose epimerase family.

The catalysed reaction is alpha-D-glucose = beta-D-glucose. Its pathway is carbohydrate metabolism; hexose metabolism. This chain is Aldose 1-epimerase (galM), found in Bacillus subtilis (strain 168).